A 93-amino-acid polypeptide reads, in one-letter code: Pyrimidine/purine nucleoside phosphorylase (93 aa).

It belongs to the nucleoside phosphorylase PpnP family.

The catalysed reaction is a purine D-ribonucleoside + phosphate = a purine nucleobase + alpha-D-ribose 1-phosphate. The enzyme catalyses adenosine + phosphate = alpha-D-ribose 1-phosphate + adenine. It carries out the reaction cytidine + phosphate = cytosine + alpha-D-ribose 1-phosphate. It catalyses the reaction guanosine + phosphate = alpha-D-ribose 1-phosphate + guanine. The catalysed reaction is inosine + phosphate = alpha-D-ribose 1-phosphate + hypoxanthine. The enzyme catalyses thymidine + phosphate = 2-deoxy-alpha-D-ribose 1-phosphate + thymine. It carries out the reaction uridine + phosphate = alpha-D-ribose 1-phosphate + uracil. It catalyses the reaction xanthosine + phosphate = alpha-D-ribose 1-phosphate + xanthine. Catalyzes the phosphorolysis of diverse nucleosides, yielding D-ribose 1-phosphate and the respective free bases. Can use uridine, adenosine, guanosine, cytidine, thymidine, inosine and xanthosine as substrates. Also catalyzes the reverse reactions. This is Pyrimidine/purine nucleoside phosphorylase from Cellvibrio japonicus (strain Ueda107) (Pseudomonas fluorescens subsp. cellulosa).